Here is a 179-residue protein sequence, read N- to C-terminus: Ribosome maturation factor RimM (179 aa).

Positions 102–179 (DGEYYWYQLE…EMKVEWDADF (78 aa)) constitute a PRC barrel domain.

This sequence belongs to the RimM family. As to quaternary structure, binds ribosomal protein uS19.

It localises to the cytoplasm. Functionally, an accessory protein needed during the final step in the assembly of 30S ribosomal subunit, possibly for assembly of the head region. Essential for efficient processing of 16S rRNA. May be needed both before and after RbfA during the maturation of 16S rRNA. It has affinity for free ribosomal 30S subunits but not for 70S ribosomes. The chain is Ribosome maturation factor RimM from Pseudomonas syringae pv. tomato (strain ATCC BAA-871 / DC3000).